The chain runs to 382 residues: Mitogen-activated protein kinase 9 (382 aa).

One can recognise a Protein kinase domain in the interval 26 to 321; sequence YQQLKPIGSG…VDEALRHPYI (296 aa). ATP contacts are provided by residues 33–38 and Lys-55; that span reads GSGAQG. The active-site Proton acceptor is Asp-151. Thr-183 is modified (phosphothreonine). Residues 183 to 185 carry the TXY motif; sequence TPY. Tyr-185 is subject to Phosphotyrosine.

This sequence belongs to the protein kinase superfamily. CMGC Ser/Thr protein kinase family. MAP kinase subfamily. Mg(2+) serves as cofactor. Post-translationally, dually phosphorylated on Thr-183 and Tyr-185, which activates the enzyme. As to expression, expressed in the neuroepithelium of developing brain at stages 16 to 26.

It carries out the reaction L-seryl-[protein] + ATP = O-phospho-L-seryl-[protein] + ADP + H(+). It catalyses the reaction L-threonyl-[protein] + ATP = O-phospho-L-threonyl-[protein] + ADP + H(+). With respect to regulation, activated by threonine and tyrosine phosphorylation. Functionally, responds to activation by environmental stress and pro-inflammatory cytokines by phosphorylating a number of transcription factors, primarily components of AP-1 such as JUN and ATF2 and thus regulates AP-1 transcriptional activity. May play a role in the development of the central nervous system during embryogenesis. May play a role in the regulation of the circadian clock. The chain is Mitogen-activated protein kinase 9 (MAPK9) from Gallus gallus (Chicken).